The sequence spans 653 residues: Structural protein ORF653 (653 aa).

Residues alanine 300 to leucine 330 are a coiled coil. Residues glutamate 302–serine 326 are compositionally biased toward basic and acidic residues. 3 disordered regions span residues glutamate 302–glutamine 329, glycine 344–proline 388, and alanine 626–serine 653. Low complexity predominate over residues glutamate 371–arginine 381. The stretch at lysine 505–threonine 649 forms a coiled coil. The segment covering glutamate 630–asparagine 647 has biased composition (acidic residues).

The protein localises to the virion. This Acidianus two-tailed virus (ATV) protein is Structural protein ORF653.